Consider the following 1036-residue polypeptide: MESCARSASQMSSSSCCRCSSFNQKLKQGGIGGGSLPVSFSCVMIGGGGGRRLIDQERGKVRGRERKIGELMQVRASAQGGLLNLGNLLFNFKGGDPAESTKQQYASTVTLINQLEPQISSLTDSQLTDRTSLLRQRALSGESLDSILPEAFAVVREASKRVLGLRPFDVQLIGGMVLHKGEIAEMRTGEGKTLVAILPAYLNALTGKGVHVVTVNDYLARRDCEWVGQVARFLGLKVGLVQQNMTSEVRRENYLCDITYVTNSELGFDFLRDNLATSVDELVLRGFNFCVIDEVDSILIDEARTPLIISGPAEKPSERYYKAAKIAAAFERDIHYTVDEKQKTVLIMEQGYQDAEEILDVEDLYDPREQWALYILNAIKAKELFLKDVNYIIRGKEILIVDEFTGRVMQGRRWSDGLHQAVEAKEGVPIQNETITLASISYQNFFLQFPKLCGMTGTAATESAEFESIYKLKVTIVPTNKPMIRKDESDVVFRATSGKWRAVVVEISRMHKTGLPVLVGTTSVEQSESLSEQLQQASIPHEVLNAKPENVEREAEIVAQSGRLGAVTIATNMAGRGTDIILGGNAEFMARLKIREMLMPRVVRPGDGGFVSMKKPPPMKTWKVKETLFPCKLSQKNAKLVDEAVQLAVKTWGQRSLSELEAEERLSYSCEKGPAQDEVIAKLRHAFLEVAKEYKTFTDEEKNKVVLAGGLHVIGTERHESRRIDNQLRGRSGRQGDPGSSRFFLSLEDNIFRVFGGDRIQGLMRAFRVEDLPIESKMLTRALDEAQRKVENYFFDIRKQLFEYDEVLNSQRDRVYVERRRALESDNLESLLIEYAELTMDDILEANIGSDAPKENWDLEKLIAKLQQYCYLLNDLTPELLSNNCSTYEDLQDYLRRCGREAYLQKKDMVENQAPGLMKEAERFLILSNIDRLWKEHLQAIKFVQQAVGLRGYAQRDPLIEYKLEGYNLFLEMMAQIRRNVIYSAYQFKPVVVKNQEQQQKGKPDSSNVENKRIGDANLNPVSVTESPSSDSPQNT.

The transit peptide at 1 to 76 directs the protein to the chloroplast; the sequence is MESCARSASQ…KIGELMQVRA (76 aa). 186-193 provides a ligand contact to ATP; that stretch reads MRTGEGKT. The segment at 995–1036 is disordered; sequence NQEQQQKGKPDSSNVENKRIGDANLNPVSVTESPSSDSPQNT. The span at 1000 to 1015 shows a compositional bias: basic and acidic residues; it reads QKGKPDSSNVENKRIG. Positions 1020–1036 are enriched in polar residues; sequence NPVSVTESPSSDSPQNT.

This sequence belongs to the SecA family.

It localises to the plastid. It is found in the chloroplast stroma. The protein localises to the chloroplast thylakoid membrane. It carries out the reaction ATP + H2O + chloroplast-proteinSide 1 = ADP + phosphate + chloroplast-proteinSide 2.. Its function is as follows. Has a central role in coupling the hydrolysis of ATP to the transfer of proteins across the thylakoid membrane. This is Protein translocase subunit SecA, chloroplastic from Spinacia oleracea (Spinach).